A 237-amino-acid chain; its full sequence is Phosphoribosylaminoimidazole-succinocarboxamide synthase (237 aa).

It belongs to the SAICAR synthetase family.

It carries out the reaction 5-amino-1-(5-phospho-D-ribosyl)imidazole-4-carboxylate + L-aspartate + ATP = (2S)-2-[5-amino-1-(5-phospho-beta-D-ribosyl)imidazole-4-carboxamido]succinate + ADP + phosphate + 2 H(+). It participates in purine metabolism; IMP biosynthesis via de novo pathway; 5-amino-1-(5-phospho-D-ribosyl)imidazole-4-carboxamide from 5-amino-1-(5-phospho-D-ribosyl)imidazole-4-carboxylate: step 1/2. The protein is Phosphoribosylaminoimidazole-succinocarboxamide synthase of Pseudomonas fluorescens (strain SBW25).